We begin with the raw amino-acid sequence, 227 residues long: MVIIMVFGNIGQDKSIEILKIPKDRVGVLIGKKGNVKKTIEKELGVKLEIDADGTVTIYGTDKQKDPLAVWKARDIVRAIGRGFNPEIALKLVSDEYVLEVIDIEDYASSDNSIRRLKGRVIGKEGKSRRYIESLTGANVSVYGNTVAIVGEHEPVQIAKEAVEMLLRGASHAKTYKFLERERQKIKRARFELWKKKSDVDELYEKMNPNYEEIEIEEDEDEIEDEE.

2 KH domains span residues 14–77 and 106–163; these read KSIE…RDIV and DYAS…KEAV.

This chain is KH domain-containing protein MJ0443, found in Methanocaldococcus jannaschii (strain ATCC 43067 / DSM 2661 / JAL-1 / JCM 10045 / NBRC 100440) (Methanococcus jannaschii).